The chain runs to 364 residues: Dermonecrotic toxin SPH (364 aa).

Residues 1 to 17 (MIRIFALITALAITVKC) form the signal peptide. His29 functions as the Nucleophile in the catalytic mechanism. Mg(2+) contacts are provided by Glu49 and Asp51. His65 is an active-site residue. Cystine bridges form between Cys69/Cys75 and Cys71/Cys215. Mg(2+) is bound at residue Asp109.

It belongs to the arthropod phospholipase D family. Mg(2+) is required as a cofactor. In terms of tissue distribution, expressed in salivary glands.

Its subcellular location is the secreted. It catalyses the reaction an N-(acyl)-sphingosylphosphocholine = an N-(acyl)-sphingosyl-1,3-cyclic phosphate + choline. The enzyme catalyses an N-(acyl)-sphingosylphosphoethanolamine = an N-(acyl)-sphingosyl-1,3-cyclic phosphate + ethanolamine. It carries out the reaction a 1-acyl-sn-glycero-3-phosphocholine = a 1-acyl-sn-glycero-2,3-cyclic phosphate + choline. The catalysed reaction is a 1-acyl-sn-glycero-3-phosphoethanolamine = a 1-acyl-sn-glycero-2,3-cyclic phosphate + ethanolamine. Its function is as follows. Dermonecrotic toxins cleave the phosphodiester linkage between the phosphate and headgroup of certain phospholipids (sphingolipid and lysolipid substrates), forming an alcohol (often choline) and a cyclic phosphate. Acts on sphingomyelin (SM). It may also act on ceramide phosphoethanolamine (CPE), lysophosphatidylcholine (LPC) and lysophosphatidylethanolamine (LPE), but not on lysophosphatidylserine (LPS), and lysophosphatidylglycerol (LPG). It acts by transphosphatidylation, releasing exclusively cyclic phosphate products as second products. Induces dermonecrosis, hemolysis, increased vascular permeability, edema, inflammatory response, and platelet aggregation. The polypeptide is Dermonecrotic toxin SPH (SPH) (Ixodes scapularis (Black-legged tick)).